A 675-amino-acid polypeptide reads, in one-letter code: MTAPGFVDFPDSPFHLYQPYPPAGDQPAAIEGLAQGMRDGLMYQTLLGVTGSGKTYTMANIIARLGRPALVLAPNKTLAAQLYAEMREFFPKNAVEYFVSYYDYYQPEAYVPTRDLFIEKDSSINEHIEQMRLSATKSLLERRDTVIVGTVSCIYGIGNPGDYHAMVLILRAGDRISRREVLARLVAMQYTRNDADFARGTFRVRGETLDIFPAESPELALRLTLFDDEIESLELFDPLTGRVRQKVPRFTVYPGSHYVTPRDTVLRAIETIKEELRDRLKLLTAEGKLVEAQRLEQRTRFDLEMLQELGFCKGIENYSRHLSGAAPGEPPPTLIDYLPADALMFIDESHVTMGQLGGMYRGDRARKETLVQYGFRLPSALDNRPLRLEEFEARMRQCVFVSATPAAYEQEHSDNVVEQVVRPTGLVDPQVEVRPARTQVDDLLGEIKLRVAAQERVLVTTLTKRMAEDLTDFLAEHGVRVRYLHSDIDTVERVEIIRDLRLGTFDVLVGINLLREGLDIPEVSLVAILDADKEGFLRSERSLIQTIGRAARNLNGHAILYADAITASMRRAMDETERRRTKQLAFNAEHGITARGVNKAVRELIDGIVAPARHDTLESAIAPEVLADEKSVAREIRRLEKLMTDHARNLEFEQAAAARDALNALKQRVLLDGAA.

Positions 35 to 192 (QGMRDGLMYQ…ARLVAMQYTR (158 aa)) constitute a Helicase ATP-binding domain. 48 to 55 (GVTGSGKT) is an ATP binding site. Residues 101 to 124 (YYDYYQPEAYVPTRDLFIEKDSSI) carry the Beta-hairpin motif. The Helicase C-terminal domain occupies 439 to 605 (QVDDLLGEIK…GVNKAVRELI (167 aa)). Residues 633 to 668 (AREIRRLEKLMTDHARNLEFEQAAAARDALNALKQR) enclose the UVR domain.

Belongs to the UvrB family. As to quaternary structure, forms a heterotetramer with UvrA during the search for lesions. Interacts with UvrC in an incision complex.

Its subcellular location is the cytoplasm. Its function is as follows. The UvrABC repair system catalyzes the recognition and processing of DNA lesions. A damage recognition complex composed of 2 UvrA and 2 UvrB subunits scans DNA for abnormalities. Upon binding of the UvrA(2)B(2) complex to a putative damaged site, the DNA wraps around one UvrB monomer. DNA wrap is dependent on ATP binding by UvrB and probably causes local melting of the DNA helix, facilitating insertion of UvrB beta-hairpin between the DNA strands. Then UvrB probes one DNA strand for the presence of a lesion. If a lesion is found the UvrA subunits dissociate and the UvrB-DNA preincision complex is formed. This complex is subsequently bound by UvrC and the second UvrB is released. If no lesion is found, the DNA wraps around the other UvrB subunit that will check the other stand for damage. The protein is UvrABC system protein B of Bordetella petrii (strain ATCC BAA-461 / DSM 12804 / CCUG 43448).